We begin with the raw amino-acid sequence, 509 residues long: ATP synthase subunit alpha, mitochondrial (509 aa).

Position 171 to 178 (Gly171 to Thr178) interacts with ATP.

This sequence belongs to the ATPase alpha/beta chains family. F-type ATPases have 2 components, CF(1) - the catalytic core - and CF(0) - the membrane proton channel. CF(1) has five subunits: alpha(3), beta(3), gamma(1), delta(1), epsilon(1). CF(0) has three main subunits: a, b and c.

It localises to the mitochondrion. Its subcellular location is the mitochondrion inner membrane. Functionally, mitochondrial membrane ATP synthase (F(1)F(0) ATP synthase or Complex V) produces ATP from ADP in the presence of a proton gradient across the membrane which is generated by electron transport complexes of the respiratory chain. F-type ATPases consist of two structural domains, F(1) - containing the extramembraneous catalytic core, and F(0) - containing the membrane proton channel, linked together by a central stalk and a peripheral stalk. During catalysis, ATP synthesis in the catalytic domain of F(1) is coupled via a rotary mechanism of the central stalk subunits to proton translocation. Subunits alpha and beta form the catalytic core in F(1). Rotation of the central stalk against the surrounding alpha(3)beta(3) subunits leads to hydrolysis of ATP in three separate catalytic sites on the beta subunits. Subunit alpha does not bear the catalytic high-affinity ATP-binding sites. This chain is ATP synthase subunit alpha, mitochondrial (ATPA), found in Nicotiana plumbaginifolia (Leadwort-leaved tobacco).